The primary structure comprises 80 residues: MRLQLILTITLLLTSFMGYRDAAVIQGKTERSAMKMRKLLQILHKNSCGCNDDDSDGDDCCFGTCLDNACWPVKKRSSAI.

A signal peptide spans 1–22 (MRLQLILTITLLLTSFMGYRDA). Residues 23–36 (AVIQGKTERSAMKM) constitute a propeptide that is removed on maturation. Intrachain disulfides connect Cys-48–Cys-61, Cys-50–Cys-65, and Cys-60–Cys-70. A propeptide spanning residues 77-80 (SSAI) is cleaved from the precursor.

Expressed by the venom duct.

The protein resides in the secreted. The sequence is that of Turripeptide VI/VII-01 from Gemmula speciosa (Splendid gem-turris).